A 296-amino-acid chain; its full sequence is Putative methyltransferase HI_1523 (296 aa).

This sequence belongs to the N(4)/N(6)-methyltransferase family.

This Haemophilus influenzae (strain ATCC 51907 / DSM 11121 / KW20 / Rd) protein is Putative methyltransferase HI_1523.